The chain runs to 479 residues: D-aminoacyl-tRNA deacylase (479 aa).

It belongs to the DtdA deacylase family. As to quaternary structure, monomer. The cofactor is Zn(2+).

The enzyme catalyses a D-aminoacyl-tRNA + H2O = a tRNA + a D-alpha-amino acid + H(+). It catalyses the reaction glycyl-tRNA(Ala) + H2O = tRNA(Ala) + glycine + H(+). D-aminoacyl-tRNA deacylase with broad substrate specificity. By recycling D-aminoacyl-tRNA to D-amino acids and free tRNA molecules, this enzyme counteracts the toxicity associated with the formation of D-aminoacyl-tRNA entities in vivo. The sequence is that of D-aminoacyl-tRNA deacylase from Methanococcoides burtonii (strain DSM 6242 / NBRC 107633 / OCM 468 / ACE-M).